We begin with the raw amino-acid sequence, 388 residues long: Cell adhesion molecule 4 (388 aa).

The first 20 residues, 1–20, serve as a signal peptide directing secretion; it reads MGRARRFQWPLLLLWAAAAG. An Ig-like V-type domain is found at 21-119; that stretch reads PGAGQEVQTE…DTHHQIATLT (99 aa). Topologically, residues 21–324 are extracellular; it reads PGAGQEVQTE…VEAQTSVPYA (304 aa). Residues Asn31 and Asn67 are each glycosylated (N-linked (GlcNAc...) asparagine). 3 cysteine pairs are disulfide-bonded: Cys44–Cys104, Cys145–Cys199, and Cys245–Cys291. Ig-like C2-type domains lie at 124–219 and 224–307; these read PENP…YVLD and PTAR…YVLV. N-linked (GlcNAc...) asparagine glycosylation occurs at Asn286. A helical transmembrane segment spans residues 325–345; it reads IVGGILALLVFLIICVLVGMV. The Cytoplasmic portion of the chain corresponds to 346-388; sequence WCSVRQKGSYLTHEASGLDEQGEAREAFLNGSDGHKRKEEFFI. At Ser361 the chain carries Phosphoserine.

It belongs to the nectin family. In terms of assembly, monomer and homodimer. In terms of processing, N-glycosylated. As to expression, expressed in brain, prostate, brain, kidney and some other organs.

The protein resides in the membrane. Its function is as follows. Involved in the cell-cell adhesion. Has calcium- and magnesium-independent cell-cell adhesion activity. May have tumor-suppressor activity. The polypeptide is Cell adhesion molecule 4 (CADM4) (Homo sapiens (Human)).